Here is a 372-residue protein sequence, read N- to C-terminus: Anhydro-N-acetylmuramic acid kinase (372 aa).

12–19 (GTSMDALD) is an ATP binding site.

This sequence belongs to the anhydro-N-acetylmuramic acid kinase family.

It carries out the reaction 1,6-anhydro-N-acetyl-beta-muramate + ATP + H2O = N-acetyl-D-muramate 6-phosphate + ADP + H(+). It functions in the pathway amino-sugar metabolism; 1,6-anhydro-N-acetylmuramate degradation. The protein operates within cell wall biogenesis; peptidoglycan recycling. Its function is as follows. Catalyzes the specific phosphorylation of 1,6-anhydro-N-acetylmuramic acid (anhMurNAc) with the simultaneous cleavage of the 1,6-anhydro ring, generating MurNAc-6-P. Is required for the utilization of anhMurNAc either imported from the medium or derived from its own cell wall murein, and thus plays a role in cell wall recycling. The chain is Anhydro-N-acetylmuramic acid kinase from Coxiella burnetii (strain CbuK_Q154) (Coxiella burnetii (strain Q154)).